We begin with the raw amino-acid sequence, 503 residues long: Probable inactive beta-glucosidase 33 (503 aa).

The signal sequence occupies residues 1-30 (MATGELALVSSLFIVVVFLLLGAVAREASA). Residues Gln50, His150, and 195–196 (NQ) contribute to the a beta-D-glucoside site. Cys215 and Cys223 are joined by a disulfide. The N-linked (GlcNAc...) asparagine glycan is linked to Asn222. A beta-D-glucoside is bound by residues Tyr339 and Glu399. Glu399 serves as the catalytic Nucleophile. N-linked (GlcNAc...) asparagine glycosylation is present at Asn436. A beta-D-glucoside is bound by residues Trp446, 453–454 (EF), and Phe462.

The protein belongs to the glycosyl hydrolase 1 family.

The sequence is that of Probable inactive beta-glucosidase 33 (BGLU33) from Oryza sativa subsp. japonica (Rice).